The primary structure comprises 602 residues: Elongation factor 4 (602 aa).

In terms of domain architecture, tr-type G spans arginine 7–lysine 189. Residues aspartate 19 to threonine 24 and asparagine 136 to aspartate 139 contribute to the GTP site.

Belongs to the TRAFAC class translation factor GTPase superfamily. Classic translation factor GTPase family. LepA subfamily.

The protein localises to the cell inner membrane. The catalysed reaction is GTP + H2O = GDP + phosphate + H(+). Functionally, required for accurate and efficient protein synthesis under certain stress conditions. May act as a fidelity factor of the translation reaction, by catalyzing a one-codon backward translocation of tRNAs on improperly translocated ribosomes. Back-translocation proceeds from a post-translocation (POST) complex to a pre-translocation (PRE) complex, thus giving elongation factor G a second chance to translocate the tRNAs correctly. Binds to ribosomes in a GTP-dependent manner. The chain is Elongation factor 4 from Stenotrophomonas maltophilia (strain R551-3).